Reading from the N-terminus, the 1050-residue chain is Valine--tRNA ligase (1050 aa).

Residues 37–57 (EKKAAASDKPVKEAKAKKEQT) are compositionally biased toward basic and acidic residues. Residues 37 to 72 (EKKAAASDKPVKEAKAKKEQTVEAAEPVDQTPTGQR) form a disordered region. A 'HIGH' region motif is present at residues 127-137 (PNVTGNLHVGH). Residues 642–646 (KMSKS) carry the 'KMSKS' region motif. Lys645 serves as a coordination point for ATP.

The protein belongs to the class-I aminoacyl-tRNA synthetase family.

It carries out the reaction tRNA(Val) + L-valine + ATP = L-valyl-tRNA(Val) + AMP + diphosphate. The protein is Valine--tRNA ligase of Caenorhabditis elegans.